The sequence spans 484 residues: MKKWLMVQGTTSDAGKSVLVAGLCRVLARRGIQVCPFKPQNMALNSAVTPDGGEIGRAQAVQAQACGIAPSVHMNPVLLKPNSDTGAQVILQGRALSNMEANAYHDYKKVAMDTVMDSFQRLQQEYEAIMIEGAGSPAEINLRENDIANMGFAEKADVPVIIVADIDRGGVFAHLYGTLALLSESEQARVKGFVINRFRGDIGLLQSGLDWLEQKTGKPVIGVLPYLHGFDLEAEDAIAAQQNLSADRQLRVAVPVFTRISNHTDFDPLRLNPNIDFRYVGQGESLSGADLIILPGSKSTRADLAYLRSQGWDKEILRHLRLGGKVMGICGGFQMLGEWVHDPLGIEGEAGSSEGLGLFAMQTELTAEKRLTNVKGHLTLDGQTVAAQGYEIHAGHSSWAADQKSPIILSDGSLDGLVSDCNQGFGTYLHGIFDRPETALRICQWAGAKEIEAYDHRAAQERAIDRIADAIEQHLDLTLLWPDL.

Positions 249–438 (QLRVAVPVFT…LHGIFDRPET (190 aa)) constitute a GATase cobBQ-type domain. Cys330 acts as the Nucleophile in catalysis. The active site involves His430.

It belongs to the CobB/CobQ family. CobQ subfamily.

Its pathway is cofactor biosynthesis; adenosylcobalamin biosynthesis. In terms of biological role, catalyzes amidations at positions B, D, E, and G on adenosylcobyrinic A,C-diamide. NH(2) groups are provided by glutamine, and one molecule of ATP is hydrogenolyzed for each amidation. The chain is Cobyric acid synthase from Vibrio cholerae serotype O1 (strain ATCC 39315 / El Tor Inaba N16961).